A 266-amino-acid polypeptide reads, in one-letter code: Large ribosomal subunit protein eL8 (266 aa).

Residues 1–11 (MPKGKKAKGKK) show a composition bias toward basic residues. Disordered stretches follow at residues 1–28 (MPKG…KKVV) and 105–134 (ETKQ…KRPP). Over residues 116–130 (ARAEQKAAGKGDAPT) the composition is skewed to basic and acidic residues.

This sequence belongs to the eukaryotic ribosomal protein eL8 family. Component of the large ribosomal subunit.

It localises to the cytoplasm. In terms of biological role, component of the large ribosomal subunit. The ribosome is a large ribonucleoprotein complex responsible for the synthesis of proteins in the cell. This is Large ribosomal subunit protein eL8 (rpl7a) from Takifugu rubripes (Japanese pufferfish).